A 67-amino-acid chain; its full sequence is Phycobilisome 7.8 kDa linker polypeptide, allophycocyanin-associated, core (67 aa).

The CpcD-like domain maps to 1–56 (MRMFRITACVPSQTRIRTQRELQNTYFTKLVPYDNWFREQQRIMKMGGKIVKVELA).

This sequence belongs to the phycobilisome linker protein family.

It localises to the cellular thylakoid membrane. In terms of biological role, rod linker protein, associated with allophycocyanin. Linker polypeptides determine the state of aggregation and the location of the disk-shaped phycobiliprotein units within the phycobilisome and modulate their spectroscopic properties in order to mediate a directed and optimal energy transfer. The protein is Phycobilisome 7.8 kDa linker polypeptide, allophycocyanin-associated, core (apcC) of Synechocystis sp. (strain PCC 6714) (Aphanocapsa sp. (strain PCC 6714)).